Consider the following 86-residue polypeptide: Putative defensin-like protein 9 (86 aa).

The signal sequence occupies residues M1–G29. Residue Q30 is modified to Pyrrolidone carboxylic acid. Cystine bridges form between C34-C79, C45-C65, C51-C73, and C55-C75.

It belongs to the DEFL family.

The protein localises to the secreted. The polypeptide is Putative defensin-like protein 9 (LCR76) (Arabidopsis thaliana (Mouse-ear cress)).